The following is a 409-amino-acid chain: tRNA(Met) cytidine acetate ligase (409 aa).

ATP is bound by residues 7–20, glycine 102, asparagine 169, and arginine 194; that span reads VVEY…HLYH.

Belongs to the TmcAL family.

The protein localises to the cytoplasm. It carries out the reaction cytidine(34) in elongator tRNA(Met) + acetate + ATP = N(4)-acetylcytidine(34) in elongator tRNA(Met) + AMP + diphosphate. In terms of biological role, catalyzes the formation of N(4)-acetylcytidine (ac(4)C) at the wobble position of elongator tRNA(Met), using acetate and ATP as substrates. First activates an acetate ion to form acetyladenylate (Ac-AMP) and then transfers the acetyl group to tRNA to form ac(4)C34. The polypeptide is tRNA(Met) cytidine acetate ligase (Clostridium botulinum (strain Langeland / NCTC 10281 / Type F)).